Reading from the N-terminus, the 1159-residue chain is RAD51-associated protein 2 (1159 aa).

Residues 1-35 (MSLPQPTPRMAELRKPTSSLTPPEDPDSQPPSSKR) form a disordered region. Positions 1111 to 1159 (SHFPHGISRVRPLKTCSRPIRIGLSRKARIKQLHPYLKQMCYGNLKENF) are interaction with RAD51.

Interacts with RAD51. In terms of tissue distribution, specifically expressed in meiotic tissues. Highly expressed in testis.

In Homo sapiens (Human), this protein is RAD51-associated protein 2 (RAD51AP2).